A 671-amino-acid polypeptide reads, in one-letter code: UvrABC system protein B (671 aa).

In terms of domain architecture, Helicase ATP-binding spans 26 to 183 (EGLENGLAHQ…RRLSELQYSR (158 aa)). 39–46 (GVTGSGKT) provides a ligand contact to ATP. The Beta-hairpin signature appears at 92–115 (YYDYYQPEAYVPSSDTFIEKDASV). Positions 431 to 597 (QVDDLLSEIR…GLNKKIGDIL (167 aa)) constitute a Helicase C-terminal domain. In terms of domain architecture, UVR spans 631–666 (DQKIRELEAKMYTYAQNLEFEQAAELRDQVHQLRQQ).

Belongs to the UvrB family. As to quaternary structure, forms a heterotetramer with UvrA during the search for lesions. Interacts with UvrC in an incision complex.

It is found in the cytoplasm. In terms of biological role, the UvrABC repair system catalyzes the recognition and processing of DNA lesions. A damage recognition complex composed of 2 UvrA and 2 UvrB subunits scans DNA for abnormalities. Upon binding of the UvrA(2)B(2) complex to a putative damaged site, the DNA wraps around one UvrB monomer. DNA wrap is dependent on ATP binding by UvrB and probably causes local melting of the DNA helix, facilitating insertion of UvrB beta-hairpin between the DNA strands. Then UvrB probes one DNA strand for the presence of a lesion. If a lesion is found the UvrA subunits dissociate and the UvrB-DNA preincision complex is formed. This complex is subsequently bound by UvrC and the second UvrB is released. If no lesion is found, the DNA wraps around the other UvrB subunit that will check the other stand for damage. The protein is UvrABC system protein B of Yersinia pseudotuberculosis serotype IB (strain PB1/+).